A 426-amino-acid polypeptide reads, in one-letter code: Serine--tRNA ligase (426 aa).

232–234 (TAE) contributes to the L-serine binding site. 263-265 (RRE) provides a ligand contact to ATP. Residue Glu-286 coordinates L-serine. An ATP-binding site is contributed by 350-353 (EISS). Ser-385 provides a ligand contact to L-serine.

Belongs to the class-II aminoacyl-tRNA synthetase family. Type-1 seryl-tRNA synthetase subfamily. Homodimer. The tRNA molecule binds across the dimer.

The protein resides in the cytoplasm. The enzyme catalyses tRNA(Ser) + L-serine + ATP = L-seryl-tRNA(Ser) + AMP + diphosphate + H(+). It catalyses the reaction tRNA(Sec) + L-serine + ATP = L-seryl-tRNA(Sec) + AMP + diphosphate + H(+). It participates in aminoacyl-tRNA biosynthesis; selenocysteinyl-tRNA(Sec) biosynthesis; L-seryl-tRNA(Sec) from L-serine and tRNA(Sec): step 1/1. Its function is as follows. Catalyzes the attachment of serine to tRNA(Ser). Is also able to aminoacylate tRNA(Sec) with serine, to form the misacylated tRNA L-seryl-tRNA(Sec), which will be further converted into selenocysteinyl-tRNA(Sec). This is Serine--tRNA ligase from Fervidobacterium nodosum (strain ATCC 35602 / DSM 5306 / Rt17-B1).